We begin with the raw amino-acid sequence, 706 residues long: Axin-related protein (706 aa).

The RGS domain maps to 72–191 (SLNLLLDDQD…LQSDICKEYA (120 aa)). Disordered stretches follow at residues 278–298 (MTDGSVDGIPPYRSKKQREIH), 400–482 (TPAN…GTSA), and 585–605 (STTLKEKGKTAESVPSSGFST). Positions 402 to 412 (ANLSPRSQSPF) are enriched in polar residues. Residues 453–462 (RSSVSSQLPR) show a composition bias toward low complexity. Residues 624 to 706 (GQGLAIVYYF…KIICKVERAC (83 aa)) enclose the DIX domain.

As to quaternary structure, interacts with dvl2/dsh via DIX domains in both proteins. Forms a complex with ctnnb1/beta-catenin and gsk3b. Also forms heterodimers with mouse Axin1.

It localises to the cytoplasm. It is found in the cytoplasmic vesicle. Regulates the wnt signaling pathway by interacting with dvl2/dsh, which displaces gsk3b from the axnr-gsk3b complex and thus prevents degradation of ctnnb1/beta-catenin. In Xenopus laevis (African clawed frog), this protein is Axin-related protein.